Consider the following 359-residue polypeptide: Chorismate synthase (359 aa).

R47 contributes to the NADP(+) binding site. FMN is bound by residues 123 to 125, G283, 298 to 302, and R326; these read RSS and KPTSS.

Belongs to the chorismate synthase family. Homotetramer. FMNH2 is required as a cofactor.

It carries out the reaction 5-O-(1-carboxyvinyl)-3-phosphoshikimate = chorismate + phosphate. The protein operates within metabolic intermediate biosynthesis; chorismate biosynthesis; chorismate from D-erythrose 4-phosphate and phosphoenolpyruvate: step 7/7. Catalyzes the anti-1,4-elimination of the C-3 phosphate and the C-6 proR hydrogen from 5-enolpyruvylshikimate-3-phosphate (EPSP) to yield chorismate, which is the branch point compound that serves as the starting substrate for the three terminal pathways of aromatic amino acid biosynthesis. This reaction introduces a second double bond into the aromatic ring system. This chain is Chorismate synthase, found in Chlamydia felis (strain Fe/C-56) (Chlamydophila felis).